The primary structure comprises 562 residues: Glucan 1,3-beta-glucosidase 2 (562 aa).

Positions 1–22 (MPLKSFFFSAFLVLCLSKFTQG) are cleaved as a signal peptide. 7 N-linked (GlcNAc...) asparagine glycosylation sites follow: N50, N77, N86, N90, N106, N157, and N220. The active-site Proton donor is the E254. N-linked (GlcNAc...) asparagine glycans are attached at residues N281, N285, N310, N317, and N322. H334 (nucleophile) is an active-site residue. N-linked (GlcNAc...) asparagine glycans are attached at residues N401, N480, and N539.

This sequence belongs to the glycosyl hydrolase 5 (cellulase A) family.

The protein resides in the cell membrane. The catalysed reaction is Successive hydrolysis of beta-D-glucose units from the non-reducing ends of (1-&gt;3)-beta-D-glucans, releasing alpha-glucose.. The sequence is that of Glucan 1,3-beta-glucosidase 2 (EXG2) from Saccharomyces cerevisiae (strain ATCC 204508 / S288c) (Baker's yeast).